Reading from the N-terminus, the 306-residue chain is tRNA pseudouridine synthase B (306 aa).

The active-site Nucleophile is the Asp39.

Belongs to the pseudouridine synthase TruB family. Type 1 subfamily.

It carries out the reaction uridine(55) in tRNA = pseudouridine(55) in tRNA. In terms of biological role, responsible for synthesis of pseudouridine from uracil-55 in the psi GC loop of transfer RNAs. The protein is tRNA pseudouridine synthase B of Arthrobacter sp. (strain FB24).